Reading from the N-terminus, the 88-residue chain is Small ribosomal subunit protein bS18B (88 aa).

This sequence belongs to the bacterial ribosomal protein bS18 family. Part of the 30S ribosomal subunit. Forms a tight heterodimer with protein bS6.

In terms of biological role, binds as a heterodimer with protein bS6 to the central domain of the 16S rRNA, where it helps stabilize the platform of the 30S subunit. This Roseiflexus castenholzii (strain DSM 13941 / HLO8) protein is Small ribosomal subunit protein bS18B.